Reading from the N-terminus, the 314-residue chain is Protoheme IX farnesyltransferase (314 aa).

The next 8 helical transmembrane spans lie at 31–51 (VMSLVIFTALVGMAMAPGHFH), 52–72 (PVLAITSLLCIAVGAGASGAL), 119–139 (ILVNWIAGALLAFTIFFYVVI), 152–172 (IVIGGAAGALPPVVAWAAVTG), 179–199 (LLLFAIIFFWTPPHFWALALF), 225–245 (ILLYTIVLIAVAAAPWALGYF), 247–267 (AVYGVVSLILGAGMLVLAINV), and 284–304 (FAFSILYLFALFATLLAEVVF).

The protein belongs to the UbiA prenyltransferase family. Protoheme IX farnesyltransferase subfamily.

The protein resides in the cell inner membrane. It carries out the reaction heme b + (2E,6E)-farnesyl diphosphate + H2O = Fe(II)-heme o + diphosphate. It functions in the pathway porphyrin-containing compound metabolism; heme O biosynthesis; heme O from protoheme: step 1/1. Functionally, converts heme B (protoheme IX) to heme O by substitution of the vinyl group on carbon 2 of heme B porphyrin ring with a hydroxyethyl farnesyl side group. This Bradyrhizobium diazoefficiens (strain JCM 10833 / BCRC 13528 / IAM 13628 / NBRC 14792 / USDA 110) protein is Protoheme IX farnesyltransferase.